The primary structure comprises 497 residues: UDP-N-acetylmuramoyl-L-alanyl-D-glutamate--2,6-diaminopimelate ligase (497 aa).

Ser-33 contributes to the UDP-N-acetyl-alpha-D-muramoyl-L-alanyl-D-glutamate binding site. 119–125 (GTNGKTT) lines the ATP pocket. UDP-N-acetyl-alpha-D-muramoyl-L-alanyl-D-glutamate contacts are provided by residues 161–162 (TT), Ser-188, Gln-194, and Arg-196. At Lys-228 the chain carries N6-carboxylysine. Meso-2,6-diaminopimelate-binding positions include Arg-390, 414–417 (DNPR), Gly-465, and Glu-469. A Meso-diaminopimelate recognition motif motif is present at residues 414-417 (DNPR).

It belongs to the MurCDEF family. MurE subfamily. Requires Mg(2+) as cofactor. Post-translationally, carboxylation is probably crucial for Mg(2+) binding and, consequently, for the gamma-phosphate positioning of ATP.

The protein localises to the cytoplasm. The catalysed reaction is UDP-N-acetyl-alpha-D-muramoyl-L-alanyl-D-glutamate + meso-2,6-diaminopimelate + ATP = UDP-N-acetyl-alpha-D-muramoyl-L-alanyl-gamma-D-glutamyl-meso-2,6-diaminopimelate + ADP + phosphate + H(+). The protein operates within cell wall biogenesis; peptidoglycan biosynthesis. Functionally, catalyzes the addition of meso-diaminopimelic acid to the nucleotide precursor UDP-N-acetylmuramoyl-L-alanyl-D-glutamate (UMAG) in the biosynthesis of bacterial cell-wall peptidoglycan. This is UDP-N-acetylmuramoyl-L-alanyl-D-glutamate--2,6-diaminopimelate ligase from Synechococcus elongatus (strain ATCC 33912 / PCC 7942 / FACHB-805) (Anacystis nidulans R2).